We begin with the raw amino-acid sequence, 216 residues long: uncharacterized protein (216 aa).

A helical membrane pass occupies residues 7–29; it reads ILVIFFLIFFIGFEFSDMTLAFI.

It is found in the membrane. This is an uncharacterized protein from Archaeoglobus fulgidus (strain ATCC 49558 / DSM 4304 / JCM 9628 / NBRC 100126 / VC-16).